A 410-amino-acid chain; its full sequence is Elongation factor Tu, apicoplast (410 aa).

In terms of domain architecture, tr-type G spans 10–214; the sequence is KQHINLGTIG…QIIDNIIIPT (205 aa). The G1 stretch occupies residues 19–26; that stretch reads GHVDHGKT. Position 19-26 (19-26) interacts with GTP; that stretch reads GHVDHGKT. Thr-26 contributes to the Mg(2+) binding site. The interval 60-64 is G2; it reads GITIN. The G3 stretch occupies residues 81 to 84; that stretch reads DCPG. GTP contacts are provided by residues 81 to 85 and 136 to 139; these read DCPGH and NKED. Residues 136-139 form a G4 region; the sequence is NKED. The interval 174–176 is G5; it reads SAL.

The protein belongs to the TRAFAC class translation factor GTPase superfamily. Classic translation factor GTPase family. EF-Tu/EF-1A subfamily.

The protein resides in the plastid. It is found in the apicoplast. The catalysed reaction is GTP + H2O = GDP + phosphate + H(+). Functionally, GTP hydrolase that promotes the GTP-dependent binding of aminoacyl-tRNA to the A-site of ribosomes during protein biosynthesis. The sequence is that of Elongation factor Tu, apicoplast (tufA) from Plasmodium falciparum (isolate 3D7).